A 510-amino-acid polypeptide reads, in one-letter code: ATP synthase subunit alpha 1 (510 aa).

169–176 (GDRQTGKT) is a binding site for ATP.

It belongs to the ATPase alpha/beta chains family. As to quaternary structure, F-type ATPases have 2 components, CF(1) - the catalytic core - and CF(0) - the membrane proton channel. CF(1) has five subunits: alpha(3), beta(3), gamma(1), delta(1), epsilon(1). CF(0) has three main subunits: a(1), b(2) and c(9-12). The alpha and beta chains form an alternating ring which encloses part of the gamma chain. CF(1) is attached to CF(0) by a central stalk formed by the gamma and epsilon chains, while a peripheral stalk is formed by the delta and b chains.

It is found in the cell inner membrane. The enzyme catalyses ATP + H2O + 4 H(+)(in) = ADP + phosphate + 5 H(+)(out). Produces ATP from ADP in the presence of a proton gradient across the membrane. The alpha chain is a regulatory subunit. This chain is ATP synthase subunit alpha 1, found in Marinomonas sp. (strain MWYL1).